Consider the following 1383-residue polypeptide: Putative autophagy-related protein 11 (1383 aa).

2 coiled-coil regions span residues 16 to 49 and 117 to 324; these read DKNN…YELN and NLFL…QNKE. Composition is skewed to basic and acidic residues over residues 1151 to 1224 and 1233 to 1249; these read EEEK…EDRK and HSSD…KTKE. The tract at residues 1151–1249 is disordered; it reads EEEKKKNEEE…KYNKKEKTKE (99 aa).

This sequence belongs to the ATG11 family.

Its function is as follows. Involved in cytoplasm to vacuole transport (Cvt), pexophagy, mitophagy and nucleophagy. Works as scaffold proteins that recruit ATG proteins to the pre-autophagosome (PAS), the site of vesicle/autophagosome formation. This chain is Putative autophagy-related protein 11, found in Plasmodium falciparum (isolate 3D7).